The following is a 491-amino-acid chain: (S)-canadine synthase (491 aa).

A helical transmembrane segment spans residues 6-26 (LLVCATVAIVFATTTIIRILF). Cysteine 434 provides a ligand contact to heme.

The protein belongs to the cytochrome P450 family. Heme is required as a cofactor. In terms of tissue distribution, expressed at low levels in roots.

It is found in the endoplasmic reticulum membrane. Its subcellular location is the microsome membrane. The catalysed reaction is (S)-tetrahydrocolumbamine + reduced [NADPH--hemoprotein reductase] + O2 = (S)-canadine + oxidized [NADPH--hemoprotein reductase] + 2 H2O + H(+). In terms of biological role, involved in the last but one step of the biosynthesis of berberine, an antimicrobial benzylisoquinoline alkaloid. Converts (S)-tetrahydrocolumbamine (THC) to (S)-tetrahydroberberine (THB) also called (S)-canadine. This is (S)-canadine synthase (CYP719A1) from Coptis japonica (Japanese goldthread).